We begin with the raw amino-acid sequence, 124 residues long: Urease subunit beta (124 aa).

Belongs to the urease beta subunit family. In terms of assembly, heterotrimer of UreA (gamma), UreB (beta) and UreC (alpha) subunits. Three heterotrimers associate to form the active enzyme.

Its subcellular location is the cytoplasm. The catalysed reaction is urea + 2 H2O + H(+) = hydrogencarbonate + 2 NH4(+). The protein operates within nitrogen metabolism; urea degradation; CO(2) and NH(3) from urea (urease route): step 1/1. In Ureaplasma parvum serovar 3 (strain ATCC 27815 / 27 / NCTC 11736), this protein is Urease subunit beta.